Consider the following 116-residue polypeptide: CDKN2AIP N-terminal-like protein (116 aa).

Residue Met-1 is modified to N-acetylmethionine. The region spanning Ala-24–Ser-116 is the XRN2-binding (XTBD) domain.

Belongs to the CARF family. As to quaternary structure, interacts with XRN2; the interaction is direct.

This Homo sapiens (Human) protein is CDKN2AIP N-terminal-like protein (CDKN2AIPNL).